The primary structure comprises 430 residues: Histidine--tRNA ligase (430 aa).

This sequence belongs to the class-II aminoacyl-tRNA synthetase family. As to quaternary structure, homodimer.

It is found in the cytoplasm. It catalyses the reaction tRNA(His) + L-histidine + ATP = L-histidyl-tRNA(His) + AMP + diphosphate + H(+). In Anaplasma marginale (strain St. Maries), this protein is Histidine--tRNA ligase.